A 178-amino-acid chain; its full sequence is Small ribosomal subunit protein bS16 (178 aa).

The segment at 78-178 (KLGITQWTAG…AAPAEGEEQA (101 aa)) is disordered. Residues 91–113 (KKGEPGQKAKERAEERAQREADR) are compositionally biased toward basic and acidic residues. The segment covering 114–127 (AAAAAEAAAAPAEE) has biased composition (low complexity). The span at 128–139 (APAEEAPAEEAA) shows a compositional bias: acidic residues. Positions 140 to 172 (AEAAPEAAAAEEAPAAEAAAEEAAPAAEEAAPA) are enriched in low complexity.

It belongs to the bacterial ribosomal protein bS16 family.

In Phenylobacterium zucineum (strain HLK1), this protein is Small ribosomal subunit protein bS16.